The primary structure comprises 455 residues: Tyramine receptor Ser-2 (455 aa).

At 1-60 (MFRNYTDSVQEMVLRAIDSIRDSVINASSAVSTTTLPPLDIPMTSMKPPSIIPTVELVLG) the chain is on the extracellular side. Residues asparagine 4 and asparagine 26 are each glycosylated (N-linked (GlcNAc...) asparagine). Residues 61-83 (TITYLVIIAMTVVGNTLVVVAVF) form a helical membrane-spanning segment. Topologically, residues 84–93 (SYRPLKKVQN) are cytoplasmic. Residues 94-115 (YFLVSLAASDLAVAIFVMPLHV) traverse the membrane as a helical segment. Over 116–133 (VTFLAGGKWLLGVTVCQF) the chain is Extracellular. A disulfide bond links cysteine 131 and cysteine 209. A helical transmembrane segment spans residues 134–154 (FTTADILLCTSSILNLCAIAL). Topologically, residues 155 to 174 (DRYWAIHNPINYAQKRTTKF) are cytoplasmic. Residues 175 to 197 (VCIVIVIVWILSMLISVPPIIGW) form a helical membrane-spanning segment. The Extracellular portion of the chain corresponds to 198-221 (NNWQENMMEDSCGLSTEKAFVVFS). The helical transmembrane segment at 222 to 243 (AAGSFFLPLLVMVVVYVKIFIS) threads the bilayer. Residues 244-370 (ARQRIRTNRG…VAKEKRAAKT (127 aa)) lie on the Cytoplasmic side of the membrane. Residues 371–392 (IAVIIFVFSFCWLPFFVAYVIR) traverse the membrane as a helical segment. At 393–407 (PFCETCKLHAKVEQA) the chain is on the extracellular side. The helical transmembrane segment at 408 to 428 (FTWLGYINSSLNPFLYGILNL) threads the bilayer. Residues 429–455 (EFRRAFKKILCPKAVLEQRRRRMSAQP) lie on the Cytoplasmic side of the membrane.

It belongs to the G-protein coupled receptor 1 family. The different isoforms are expressed in specific, but overlapping sets of sensory, inter- and motor neurons, including AIY, AIZ and RIA interneurons. They are also expressed in pharyngeal cells, head muscles and excretory gland cells.

It localises to the cell membrane. G-protein coupled receptor for tyramine, a known neurotransmitter and neuromodulator and direct precursor of octopamine. The rank order of potency is tyramine &gt; octopamine &gt; dopamine &gt; serotonin &gt; epinephrine = norepinephrine. The sequence is that of Tyramine receptor Ser-2 (ser-2) from Caenorhabditis elegans.